Here is a 127-residue protein sequence, read N- to C-terminus: Major sperm protein 78 (127 aa).

Ala-2 carries the N-acetylalanine modification. The 118-residue stretch at 9–126 (DIQTQPGTKI…RRKNLPIEYN (118 aa)) folds into the MSP domain.

Sperm.

It is found in the cell projection. The protein localises to the pseudopodium. It localises to the cytoplasm. Its subcellular location is the cytoskeleton. Its function is as follows. Central component in molecular interactions underlying sperm crawling. Forms an extensive filament system that extends from sperm villipoda, along the leading edge of the pseudopod. The protein is Major sperm protein 78 (msp-78) of Caenorhabditis elegans.